The primary structure comprises 209 residues: Small ribosomal subunit protein uS4 (209 aa).

The S4 RNA-binding domain maps to 98–164 (RRLDNVVYRL…LPIKNAIELN (67 aa)).

This sequence belongs to the universal ribosomal protein uS4 family. As to quaternary structure, part of the 30S ribosomal subunit. Contacts protein S5. The interaction surface between S4 and S5 is involved in control of translational fidelity.

One of the primary rRNA binding proteins, it binds directly to 16S rRNA where it nucleates assembly of the body of the 30S subunit. Functionally, with S5 and S12 plays an important role in translational accuracy. This is Small ribosomal subunit protein uS4 from Thermosipho melanesiensis (strain DSM 12029 / CIP 104789 / BI429).